Reading from the N-terminus, the 2894-residue chain is uncharacterized protein (2894 aa).

A helical transmembrane segment spans residues 8–28 (ISIFVFTILLLSNVSLGLNVS). PbH1 repeat units lie at residues 543 to 567 (EVRW…DISL), 2085 to 2107 (NYPL…SMLN), 2135 to 2156 (FGNI…VLYK), 2158 to 2180 (GNGI…YSKN), 2201 to 2223 (ISSI…LLEN), 2224 to 2244 (SSSS…YLKE), 2245 to 2266 (NYIS…EIVN), 2267 to 2289 (SSNV…AIFN), 2290 to 2311 (GENV…LSYG), 2341 to 2363 (LNNL…FIYS), 2367 to 2389 (ASNV…YIYG), 2390 to 2419 (VNAI…KISG), 2422 to 2444 (TKGV…SLEG), 2455 to 2477 (VENN…YIGG), 2479 to 2501 (VENV…LIQE), 2512 to 2542 (GTNI…TVGA), 2550 to 2582 (NGYI…EVYG), 2589 to 2611 (SLEF…LIGA), 2612 to 2633 (SKDI…TIPN), and 2638 to 2660 (PYNI…DLDD).

The protein resides in the membrane. This is an uncharacterized protein from Methanocaldococcus jannaschii (strain ATCC 43067 / DSM 2661 / JAL-1 / JCM 10045 / NBRC 100440) (Methanococcus jannaschii).